A 1128-amino-acid polypeptide reads, in one-letter code: Major DNA-binding protein (1128 aa).

Residues leucine 1104 to valine 1128 form a required for nuclear localization region.

Belongs to the herpesviridae major DNA-binding protein family. Homooligomers. Forms double-helical filaments necessary for the formation of replication compartments within the host nucleus. Interacts with the origin-binding protein. Interacts with the helicase primase complex; this interaction stimulates primer synthesis activity of the helicase-primase complex. Interacts with the DNA polymerase. Interacts with the alkaline exonuclease; this interaction increases its nuclease processivity.

The protein localises to the virion tegument. It localises to the host nucleus. In terms of biological role, plays several crucial roles in viral infection. Participates in the opening of the viral DNA origin to initiate replication by interacting with the origin-binding protein. May disrupt loops, hairpins and other secondary structures present on ssDNA to reduce and eliminate pausing of viral DNA polymerase at specific sites during elongation. Promotes viral DNA recombination by performing strand-transfer, characterized by the ability to transfer a DNA strand from a linear duplex to a complementary single-stranded DNA circle. Can also catalyze the renaturation of complementary single strands. Additionally, reorganizes the host cell nucleus, leading to the formation of prereplicative sites and replication compartments. This process is driven by the protein which can form double-helical filaments in the absence of DNA. The polypeptide is Major DNA-binding protein (Homo sapiens (Human)).